Consider the following 421-residue polypeptide: Eukaryotic translation initiation factor 3 subunit E (421 aa).

Positions 215–394 constitute a PCI domain; sequence FFQNDTKGKD…STVILNHPSV (180 aa).

This sequence belongs to the eIF-3 subunit E family. As to quaternary structure, component of the eukaryotic translation initiation factor 3 (eIF-3) complex.

Its subcellular location is the cytoplasm. Its function is as follows. Component of the eukaryotic translation initiation factor 3 (eIF-3) complex, which is involved in protein synthesis of a specialized repertoire of mRNAs and, together with other initiation factors, stimulates binding of mRNA and methionyl-tRNAi to the 40S ribosome. The eIF-3 complex specifically targets and initiates translation of a subset of mRNAs involved in cell proliferation. The polypeptide is Eukaryotic translation initiation factor 3 subunit E (Yarrowia lipolytica (strain CLIB 122 / E 150) (Yeast)).